Reading from the N-terminus, the 316-residue chain is Ribosomal protein L11 methyltransferase (316 aa).

Residues Thr157, Gly178, Asp200, and Asn243 each contribute to the S-adenosyl-L-methionine site.

It belongs to the methyltransferase superfamily. PrmA family.

It localises to the cytoplasm. It catalyses the reaction L-lysyl-[protein] + 3 S-adenosyl-L-methionine = N(6),N(6),N(6)-trimethyl-L-lysyl-[protein] + 3 S-adenosyl-L-homocysteine + 3 H(+). Functionally, methylates ribosomal protein L11. The protein is Ribosomal protein L11 methyltransferase of Streptococcus pneumoniae serotype 2 (strain D39 / NCTC 7466).